Here is a 370-residue protein sequence, read N- to C-terminus: Flagellar P-ring protein (370 aa).

Positions 1–21 are cleaved as a signal peptide; it reads MRLFSVVLAVFTLLLPSQAFA.

It belongs to the FlgI family. As to quaternary structure, the basal body constitutes a major portion of the flagellar organelle and consists of four rings (L,P,S, and M) mounted on a central rod.

The protein localises to the periplasm. It is found in the bacterial flagellum basal body. Its function is as follows. Assembles around the rod to form the L-ring and probably protects the motor/basal body from shearing forces during rotation. The chain is Flagellar P-ring protein from Alteromonas mediterranea (strain DSM 17117 / CIP 110805 / LMG 28347 / Deep ecotype).